The sequence spans 541 residues: Copper transport protein CutJ (541 aa).

The N-terminal stretch at 1–25 is a signal peptide; sequence MKRNRWWIILLLFLVFLPKTSFAHA. Cu cation contacts are provided by His24 and His110. A run of 8 helical transmembrane segments spans residues 146–166, 180–200, 228–248, 262–282, 293–313, 335–355, 370–390, and 407–427; these read AILYTALSLFIGTVFFHLFWY, ILTGSIAALGLALLLQLPIQT, SIWIIQAALFVLLALSVIPAI, PLIFFFGLLLAKAFTGHAAVV, FLHLTSASIWVGGIAALVLLL, WALTAVGVILFSGLLNGFFII, LLVKSGLFVFMLVLGAIHFLL, and WAIGIAVLITAAVFTSLPSPP.

In the N-terminal section; belongs to the CopC family. This sequence in the C-terminal section; belongs to the CopD family.

It is found in the cell membrane. Involved in uptake of extracellular oxidized copper under copper-limiting conditions. This chain is Copper transport protein CutJ, found in Bacillus subtilis (strain 168).